A 277-amino-acid polypeptide reads, in one-letter code: 14-3-3 protein (277 aa).

The segment at 252–277 (LQTQEQQQQPVGEGAEAPKVEATEQQ) is disordered. The segment covering 267 to 277 (EAPKVEATEQQ) has biased composition (basic and acidic residues).

The protein belongs to the 14-3-3 family.

In Eimeria tenella (Coccidian parasite), this protein is 14-3-3 protein.